Here is an 812-residue protein sequence, read N- to C-terminus: Hyaluronate lyase HylB (812 aa).

The segment at residues 1–32 is a signal peptide (tat-type signal); the sequence is MFGTPSRRTFLTASALSAMALAASPTVTDAIA. Catalysis depends on residues N222, H272, and Y281.

Belongs to the polysaccharide lyase 8 family. Post-translationally, predicted to be exported by the Tat system. The position of the signal peptide cleavage has been experimentally proven.

The protein localises to the secreted. The catalysed reaction is [hyaluronan](n) = n 3-(4-deoxy-beta-D-gluc-4-enuronosyl)-N-acetyl-D-glucosamine + H2O. Degrades hyaluronic acid (HA) exclusively into HA disaccharides (HA-2). Produced HA-2s confer anti-inflammatory properties leading to reduced immunopathology in the mouse model of acne. This Cutibacterium acnes (Propionibacterium acnes) protein is Hyaluronate lyase HylB.